We begin with the raw amino-acid sequence, 464 residues long: Bifunctional NAD(P)H-hydrate repair enzyme Nnr (464 aa).

Residues M1–P205 form an NAD(P)H-hydrate epimerase region. The YjeF N-terminal domain maps to M9–N201. Residues N55–D59 form an NADPHX 1; for epimerase activity region. Residues N56 and D114 each coordinate K(+). The NADPHX 1; for epimerase activity stretch occupies residues G118 to R124. (6S)-NADPHX contacts are provided by Y129 and D147. T150 is a K(+) binding site. Positions C203–C461 constitute a YjeF C-terminal domain. An ADP-dependent (S)-NAD(P)H-hydrate dehydratase region spans residues P205–F464. G305 is a (6S)-NADPHX binding site. Residues H348–R354 form an NADPHX 2; for dehydratase activity region. ADP is bound by residues K375–D379 and N394–G403. D404 lines the (6S)-NADPHX pocket.

In the N-terminal section; belongs to the NnrE/AIBP family. This sequence in the C-terminal section; belongs to the NnrD/CARKD family. K(+) is required as a cofactor.

The catalysed reaction is (6S)-NADHX + ADP = AMP + phosphate + NADH + H(+). It catalyses the reaction (6S)-NADPHX + ADP = AMP + phosphate + NADPH + H(+). It carries out the reaction (6R)-NADHX = (6S)-NADHX. The enzyme catalyses (6R)-NADPHX = (6S)-NADPHX. In terms of biological role, bifunctional enzyme that catalyzes the epimerization of the S- and R-forms of NAD(P)HX and the dehydration of the S-form of NAD(P)HX at the expense of ADP, which is converted to AMP. This allows the repair of both epimers of NAD(P)HX, a damaged form of NAD(P)H that is a result of enzymatic or heat-dependent hydration. The sequence is that of Bifunctional NAD(P)H-hydrate repair enzyme Nnr (nnr) from Archaeoglobus fulgidus (strain ATCC 49558 / DSM 4304 / JCM 9628 / NBRC 100126 / VC-16).